The primary structure comprises 61 residues: Small ribosomal subunit protein uS14 (61 aa).

4 residues coordinate Zn(2+): C24, C27, C40, and C43.

This sequence belongs to the universal ribosomal protein uS14 family. Zinc-binding uS14 subfamily. As to quaternary structure, part of the 30S ribosomal subunit. Contacts proteins S3 and S10. It depends on Zn(2+) as a cofactor.

Its function is as follows. Binds 16S rRNA, required for the assembly of 30S particles and may also be responsible for determining the conformation of the 16S rRNA at the A site. This Campylobacter hominis (strain ATCC BAA-381 / DSM 21671 / CCUG 45161 / LMG 19568 / NCTC 13146 / CH001A) protein is Small ribosomal subunit protein uS14.